The chain runs to 265 residues: Neuronal membrane glycoprotein M6-b (265 aa).

A helical transmembrane segment spans residues 31 to 51; sequence GGVPYASLVATILCFSGVALF. An N-linked (GlcNAc...) asparagine glycan is attached at asparagine 73. The next 2 helical transmembrane spans lie at 90–110 and 136–156; these read VIYG…AEGF and FVFL…FSAV. Asparagine 177 is a glycosylation site (N-linked (GlcNAc...) asparagine). Residues 224–244 form a helical membrane-spanning segment; sequence LFIVACAGAGATVIALLIYMM. The residue at position 257 (serine 257) is a Phosphoserine.

The protein belongs to the myelin proteolipid protein family. As to quaternary structure, interacts with SERT. In terms of tissue distribution, highly expressed in the ventral medullary surface, moderately in the cerebral cortex and cerebellum, poorly in lung and kidney, and not at all in heart, skeletal muscle, liver, stomach or stomach.

The protein resides in the membrane. It localises to the cell membrane. May be involved in neural development. Involved in regulation of osteoblast function and bone formation. Involved in matrix vesicle release by osteoblasts; this function seems to involve maintenance of the actin cytoskeleton. May be involved in cellular trafficking of SERT and thereby in regulation of serotonin uptake. This Rattus norvegicus (Rat) protein is Neuronal membrane glycoprotein M6-b (Gpm6b).